Here is a 353-residue protein sequence, read N- to C-terminus: rRNA methyltransferase 1, mitochondrial (353 aa).

The N-terminal 20 residues, 1 to 20 (MALLSTVRGATWGRLVTRHF), are a transit peptide targeting the mitochondrion. Positions 311–353 (PTEGERRQLLQDPQEPSARSEGLSMAQHPGLSSGPEKERQNEG) are disordered.

It belongs to the class IV-like SAM-binding methyltransferase superfamily. RNA methyltransferase TrmH family.

It is found in the mitochondrion matrix. The enzyme catalyses guanosine(1145) in 16S rRNA + S-adenosyl-L-methionine = 2'-O-methylguanosine(1145) in 16S rRNA + S-adenosyl-L-homocysteine + H(+). S-adenosyl-L-methionine-dependent 2'-O-ribose methyltransferase that catalyzes the formation of 2'-O-methylguanosine at position 1145 (Gm1145) in the 16S mitochondrial large subunit ribosomal RNA (mtLSU rRNA), a universally conserved modification in the peptidyl transferase domain of the mtLSU rRNA. This chain is rRNA methyltransferase 1, mitochondrial, found in Homo sapiens (Human).